Reading from the N-terminus, the 400-residue chain is Phosphoglycerate kinase (400 aa).

Substrate is bound by residues 21-23 (DFN), Arg37, 60-63 (HLGR), Arg121, and Arg154. Residues Lys204, Glu326, and 355-358 (GGDS) contribute to the ATP site.

The protein belongs to the phosphoglycerate kinase family. Monomer.

Its subcellular location is the cytoplasm. It carries out the reaction (2R)-3-phosphoglycerate + ATP = (2R)-3-phospho-glyceroyl phosphate + ADP. The protein operates within carbohydrate degradation; glycolysis; pyruvate from D-glyceraldehyde 3-phosphate: step 2/5. The sequence is that of Phosphoglycerate kinase from Chloroflexus aggregans (strain MD-66 / DSM 9485).